The sequence spans 150 residues: Large ribosomal subunit protein bL9 (150 aa).

The protein belongs to the bacterial ribosomal protein bL9 family.

Its function is as follows. Binds to the 23S rRNA. The protein is Large ribosomal subunit protein bL9 of Enterococcus faecalis (strain ATCC 700802 / V583).